We begin with the raw amino-acid sequence, 273 residues long: NAD-dependent protein deacylase (273 aa).

In terms of domain architecture, Deacetylase sirtuin-type spans 20–272 (RERLRQRIFF…PEFVEKLLEG (253 aa)). 48 to 67 (GAGISAESGIRTFRAADGLW) is a binding site for NAD(+). Substrate-binding residues include Y92 and R95. Residue 129–132 (QNID) coordinates NAD(+). The active-site Proton acceptor is H147. Zn(2+)-binding residues include C155 and C174. NAD(+) contacts are provided by residues 214–216 (GTS), 240–242 (NLE), and A258.

This sequence belongs to the sirtuin family. Class III subfamily. Zn(2+) is required as a cofactor.

The protein localises to the cytoplasm. The catalysed reaction is N(6)-acetyl-L-lysyl-[protein] + NAD(+) + H2O = 2''-O-acetyl-ADP-D-ribose + nicotinamide + L-lysyl-[protein]. The enzyme catalyses N(6)-succinyl-L-lysyl-[protein] + NAD(+) + H2O = 2''-O-succinyl-ADP-D-ribose + nicotinamide + L-lysyl-[protein]. It catalyses the reaction N(6)-(2-hydroxyisobutanoyl)-L-lysyl-[protein] + NAD(+) + H2O = 2''-O-(2-hydroxyisobutanoyl)-ADP-D-ribose + nicotinamide + L-lysyl-[protein]. Its function is as follows. NAD-dependent lysine deacetylase that specifically removes acetyl groups on target proteins. Also acts as a protein-lysine deacylase by mediating protein desuccinylation and de-2-hydroxyisobutyrylation. Modulates the activities of several proteins which are inactive in their acylated form. The polypeptide is NAD-dependent protein deacylase (Shigella flexneri).